A 388-amino-acid chain; its full sequence is Protochlorophyllide reductase A, chloroplastic (388 aa).

The transit peptide at 1–74 (MALQLLPSTL…SPSGKKTLRQ (74 aa)) directs the protein to the chloroplast. Residues 48–68 (VATAPSPVTTSPGSTASSPSG) show a composition bias toward low complexity. The segment at 48–69 (VATAPSPVTTSPGSTASSPSGK) is disordered.

The protein belongs to the short-chain dehydrogenases/reductases (SDR) family. POR subfamily.

The protein resides in the plastid. It localises to the chloroplast. It carries out the reaction chlorophyllide a + NADP(+) = protochlorophyllide a + NADPH + H(+). It participates in porphyrin-containing compound metabolism; chlorophyll biosynthesis. Phototransformation of protochlorophyllide (Pchlide) to chlorophyllide (Chlide). The sequence is that of Protochlorophyllide reductase A, chloroplastic (PORA) from Hordeum vulgare (Barley).